An 843-amino-acid chain; its full sequence is Glycogen phosphorylase, brain form (843 aa).

Ala-2 carries the post-translational modification N-acetylalanine. Residue Ser-15 is modified to Phosphoserine; by PHK; in form phosphorylase A. Residues Asp-43, Tyr-197, and Arg-310 each coordinate AMP. Tyr-197 is subject to Phosphotyrosine. Tyr-473 is subject to Phosphotyrosine. Lys-569 provides a ligand contact to pyridoxal 5'-phosphate. A pyridoxal 5'-phosphate region spans residues 677–678; that stretch reads TG. Residue Lys-681 is modified to N6-(pyridoxal phosphate)lysine.

It belongs to the glycogen phosphorylase family. In terms of assembly, homodimer. Dimers associate into a tetramer to form the enzymatically active phosphorylase A. It depends on pyridoxal 5'-phosphate as a cofactor. In terms of processing, phosphorylation of Ser-15 converts phosphorylase B (unphosphorylated) to phosphorylase A.

It catalyses the reaction [(1-&gt;4)-alpha-D-glucosyl](n) + phosphate = [(1-&gt;4)-alpha-D-glucosyl](n-1) + alpha-D-glucose 1-phosphate. Its activity is regulated as follows. Activity of phosphorylase is controlled both by allosteric means (through the non-covalent binding of metabolites) and by covalent modification. Thus AMP allosterically activates, whereas ATP, ADP, and glucose-6-phosphate allosterically inhibit, phosphorylase B. Glycogen phosphorylase that regulates glycogen mobilization. Phosphorylase is an important allosteric enzyme in carbohydrate metabolism. Enzymes from different sources differ in their regulatory mechanisms and in their natural substrates. However, all known phosphorylases share catalytic and structural properties. This Bos taurus (Bovine) protein is Glycogen phosphorylase, brain form (PYGB).